The sequence spans 148 residues: Translation initiation factor 2 subunit beta (148 aa).

Belongs to the eIF-2-beta/eIF-5 family. As to quaternary structure, heterotrimer composed of an alpha, a beta and a gamma chain.

EIF-2 functions in the early steps of protein synthesis by forming a ternary complex with GTP and initiator tRNA. This is Translation initiation factor 2 subunit beta (eif2b) from Aeropyrum pernix (strain ATCC 700893 / DSM 11879 / JCM 9820 / NBRC 100138 / K1).